Consider the following 171-residue polypeptide: PBAN-type neuropeptides (171 aa).

The first 22 residues, 1–22 (MFRLYFFFNVICIFLAIRSAIG), serve as a signal peptide directing secretion. Positions 23–47 (GEVPDATEQKINNFLASGKDSEDLS) are excised as a propeptide. Leu-59 carries the post-translational modification Leucine amide. The propeptide occupies 63 to 111 (TIASELHDEMMDEIDDNPLYYSGESPQRVASEIAQGTPYVVLLLTGRVL). Residues 120–151 (HSTTPRLGRRDASSSNENNSRPPFAPRLGRNL) form a disordered region. Leucine amide is present on residues Leu-126, Leu-147, and Leu-157. Residues 160-171 (SFGAPVVDNFAY) constitute a propeptide that is removed on maturation.

The protein belongs to the pyrokinin family.

The protein localises to the secreted. A hormone that controls sex pheromone production in females and pheromone responsiveness in male. Also mediates visceral muscle contractile activity (myotropic activity). This Aedes aegypti (Yellowfever mosquito) protein is PBAN-type neuropeptides.